A 262-amino-acid chain; its full sequence is MPAFPLLAVDIGNTTTVLGLADASGALTHTWRIRTNREMLPDDLALQLHGLFTLAGAPIPRAAVLSSVAPPVGENYALALKRHFMIDAFAVSAENLPDVTVELDTPGSVGADRLCNLFGAEKYLGGLDYAVVVDFGTSTNFDVVGRGRRFLGGILATGAQVSADALFARAAKLPRITLQAPETAIGKNTVHALQSGLVFGYAEMVDGLLRRIRAELPGEAVAVATGGFSRTVQGICQEIDYYDETLTLRGLVELWASRSEVR.

10–17 (DIGNTTTV) contacts ATP. 110–113 (GADR) is a binding site for substrate. D112 (proton acceptor) is an active-site residue. Residue D134 coordinates K(+). T137 lines the ATP pocket. T189 contributes to the substrate binding site.

Belongs to the type III pantothenate kinase family. In terms of assembly, homodimer. NH4(+) serves as cofactor. K(+) is required as a cofactor.

It is found in the cytoplasm. It catalyses the reaction (R)-pantothenate + ATP = (R)-4'-phosphopantothenate + ADP + H(+). Its pathway is cofactor biosynthesis; coenzyme A biosynthesis; CoA from (R)-pantothenate: step 1/5. Functionally, catalyzes the phosphorylation of pantothenate (Pan), the first step in CoA biosynthesis. This chain is Type III pantothenate kinase, found in Deinococcus radiodurans (strain ATCC 13939 / DSM 20539 / JCM 16871 / CCUG 27074 / LMG 4051 / NBRC 15346 / NCIMB 9279 / VKM B-1422 / R1).